A 387-amino-acid chain; its full sequence is Chlorophyll synthase, chloroplastic (387 aa).

The N-terminal 57 residues, 1-57, are a transit peptide targeting the chloroplast; the sequence is MTSILNTVSTIHSSRVTSVDRVGVLSLRNSDSVEFTRRRSGFSTLIYESPGRRFVVR. Positions 62–81 are disordered; sequence DTDKVKSQTPDKAPAGGSSI. The next 7 membrane-spanning stretches (helical) occupy residues 182–202, 210–230, 241–261, 266–286, 311–331, 336–356, and 364–384; these read VITQ…ILDV, TVFY…APPL, FALG…LFGT, VVVL…VNDF, WICV…LLAS, YALA…KYFL, and VKYQ…TALA.

It belongs to the UbiA prenyltransferase family. Chlorophyll synthase subfamily. Low level in flower buds, flowers, stems, leaves, greening cotyledons and immature siliques, but not in mature siliques or seeds.

The protein resides in the plastid. The protein localises to the chloroplast membrane. The catalysed reaction is phytyl diphosphate + chlorophyllide a + H(+) = chlorophyll a + diphosphate. It participates in porphyrin-containing compound metabolism; chlorophyll biosynthesis. Functionally, involved in one of the last steps of the biosynthesis of chlorophyll a. Catalyzes the esterification of chlorophillide a or b with a preference for geranylgeranyldiphosphate (GGPP) rather than for phytyldiphosphate (PhyPP). The polypeptide is Chlorophyll synthase, chloroplastic (CHLG) (Arabidopsis thaliana (Mouse-ear cress)).